The following is a 499-amino-acid chain: Glucose-6-phosphate exchanger SLC37A2 (499 aa).

A helical membrane pass occupies residues Tyr21–Arg40. Asn53, Asn62, and Asn66 each carry an N-linked (GlcNAc...) asparagine glycan. Transmembrane regions (helical) follow at residues Gly86–Phe106, Leu116–Trp136, Ile138–Gly158, Ala187–Leu207, Ser208–Val228, Leu302–Ile322, Gly334–Ile354, Ala362–Leu382, Val391–Ala411, Ala434–Leu454, and Gly458–Val478.

This sequence belongs to the major facilitator superfamily. Organophosphate:Pi antiporter (OPA) (TC 2.A.1.4) family.

The protein localises to the endoplasmic reticulum membrane. The enzyme catalyses D-glucose 6-phosphate(in) + phosphate(out) = D-glucose 6-phosphate(out) + phosphate(in). Inorganic phosphate and glucose-6-phosphate antiporter. May transport cytoplasmic glucose-6-phosphate into the lumen of the endoplasmic reticulum and translocate inorganic phosphate into the opposite direction. The chain is Glucose-6-phosphate exchanger SLC37A2 from Xenopus tropicalis (Western clawed frog).